The sequence spans 222 residues: UPF0758 protein YPN_3801 (222 aa).

The 123-residue stretch at valine 100–leucine 222 folds into the MPN domain. Zn(2+) contacts are provided by histidine 171, histidine 173, and aspartate 184. Positions histidine 171–aspartate 184 match the JAMM motif motif.

This sequence belongs to the UPF0758 family. YicR subfamily.

The sequence is that of UPF0758 protein YPN_3801 from Yersinia pestis bv. Antiqua (strain Nepal516).